We begin with the raw amino-acid sequence, 137 residues long: Regulator of cell cycle RGCC (137 aa).

Residues 57-116 (LERMKRRSSASVSDSSGFSDSESADSVYRDSFTFSDEKLNSPTNSSPALLPSAVTPRKAK) form a disordered region. Positions 65–82 (SASVSDSSGFSDSESADS) are enriched in low complexity. A phosphoserine mark is found at serine 67, serine 69, serine 71, serine 75, serine 91, and serine 97. Threonine 111 is subject to Phosphothreonine.

In terms of assembly, interacts with CDK1 and PLK1. Interacts with SMAD3.

It is found in the cytoplasm. The protein localises to the nucleus. Its subcellular location is the cytoskeleton. The protein resides in the microtubule organizing center. It localises to the centrosome. In terms of biological role, modulates the activity of cell cycle-specific kinases. Enhances CDK1 activity. May contribute to the regulation of the cell cycle. May inhibit growth of glioma cells by promoting arrest of mitotic progression at the G2/M transition. Fibrogenic factor contributing to the pathogenesis of renal fibrosis through fibroblast activation. The protein is Regulator of cell cycle RGCC (Rgcc) of Mus musculus (Mouse).